Here is a 230-residue protein sequence, read N- to C-terminus: Stachydrine N-demethylase reductase subunit Stc3 (230 aa).

It belongs to the non-flavoprotein flavin reductase family. In terms of assembly, the system is probably composed of an oxygenase subunit (Stc2) and two reductase subunits (Stc3 and Stc4).

Functionally, reductase involved in the catabolism of stachydrine (L-proline betaine), a source of carbon and nitrogen. Part of a Rieske-type oxygenase system that catalyzes the demethylation of stachydrine to produce N-methyl-L-proline (monomethylproline). This subunit is probably involved in the transfer of electrons from NAD(P)H to the catalytic subunit Stc2. The chain is Stachydrine N-demethylase reductase subunit Stc3 from Rhizobium meliloti (strain 1021) (Ensifer meliloti).